Reading from the N-terminus, the 542-residue chain is GPI alpha-1,2-mannosyltransferase 3 (542 aa).

The disordered stretch occupies residues 1–36 (MESQAADYNPASRNLHGSSGEMKLRRRKSRQYVSAQ). 8 helical membrane-spanning segments follow: residues 52 to 72 (LVLF…TSFV), 125 to 145 (VQFL…VADI), 213 to 233 (LVAL…PLLF), 244 to 264 (HLTL…SLII), 304 to 324 (GFPV…FLAP), 327 to 347 (LHIL…LGHK), 351 to 371 (FIYP…AHLK), and 376 to 396 (AALS…GLVH). The N-linked (GlcNAc...) asparagine glycan is linked to Asn480.

Belongs to the glycosyltransferase 22 family. PIGB subfamily.

Its subcellular location is the endoplasmic reticulum membrane. The protein operates within glycolipid biosynthesis; glycosylphosphatidylinositol-anchor biosynthesis. Alpha-1,2-mannosyltransferase that catalyzes the transfer of the third mannose, via an alpha-1,2 bond, from a dolichol-phosphate-mannose (Dol-P-Man) to an alpha-D-Man-(1-&gt;6)-2-PEtn-alpha-D-Man-(1-&gt;4)-alpha-D-GlcN-(1-&gt;6)-(1-radyl,2-acyl-sn-glycero-3-phospho)-2-acyl-inositol intermediate to generate an alpha-D-Man-(1-&gt;2)-alpha-D-Man-(1-&gt;6)-2-PEtn-alpha-D-Man-(1-&gt;4)-alpha-D-GlcN-(1-&gt;6)-(1-radyl,2-acyl-sn-glycero-3-phospho)-2-acyl-inositol (also termed H6) and participates in the nineth step of the glycosylphosphatidylinositol-anchor biosynthesis. May also add the third mannose to an alpha-D-Man-(1-&gt;6)-alpha-D-Man-(1-&gt;4)-alpha-D-GlcN-(1-&gt;6)-(1-radyl,2-acyl-sn-glycero-3-phospho)-2-acyl-inositol (also termed H3) intermediate generating an alpha-D-Man-(1-&gt;2)-alpha-D-Man-(1-&gt;6)-alpha-D-Man-(1-&gt;4)-alpha-D-GlcN-(1-&gt;6)-(1-radyl,2-acyl-sn-glycero-3-phospho)-2-acyl-inositol (also termed H4). The sequence is that of GPI alpha-1,2-mannosyltransferase 3 from Mus musculus (Mouse).